We begin with the raw amino-acid sequence, 226 residues long: Small ribosomal subunit protein uS3 (226 aa).

In terms of domain architecture, KH type-2 spans 39-107 (VRKFLNKELR…PAQINISEVR (69 aa)).

The protein belongs to the universal ribosomal protein uS3 family. Part of the 30S ribosomal subunit. Forms a tight complex with proteins S10 and S14.

In terms of biological role, binds the lower part of the 30S subunit head. Binds mRNA in the 70S ribosome, positioning it for translation. The polypeptide is Small ribosomal subunit protein uS3 (Idiomarina loihiensis (strain ATCC BAA-735 / DSM 15497 / L2-TR)).